The chain runs to 121 residues: Phosphoribosyl-AMP cyclohydrolase (121 aa).

D76 contributes to the Mg(2+) binding site. C77 contacts Zn(2+). Residues D78 and D80 each coordinate Mg(2+). Zn(2+)-binding residues include C93 and C100.

This sequence belongs to the PRA-CH family. Homodimer. It depends on Mg(2+) as a cofactor. Zn(2+) serves as cofactor.

It localises to the cytoplasm. It catalyses the reaction 1-(5-phospho-beta-D-ribosyl)-5'-AMP + H2O = 1-(5-phospho-beta-D-ribosyl)-5-[(5-phospho-beta-D-ribosylamino)methylideneamino]imidazole-4-carboxamide. It functions in the pathway amino-acid biosynthesis; L-histidine biosynthesis; L-histidine from 5-phospho-alpha-D-ribose 1-diphosphate: step 3/9. Functionally, catalyzes the hydrolysis of the adenine ring of phosphoribosyl-AMP. This Paracoccus denitrificans (strain Pd 1222) protein is Phosphoribosyl-AMP cyclohydrolase.